The following is an 826-amino-acid chain: Copper-transporting ATPase 1 (826 aa).

HMA domains lie at 15–80 and 82–147; these read APTD…YEPK and IIQE…YDVR. The Cu cation site is built by cysteine 26, cysteine 29, cysteine 93, and cysteine 96. 6 helical membrane-spanning segments follow: residues 172 to 192, 209 to 229, 246 to 266, 270 to 290, 429 to 449, and 457 to 477; these read LVIL…GSHF, NLYI…LRFF, LVVL…FASG, SGTA…ILLG, AWFV…WYVF, and FALV…MGLA. Aspartate 514 acts as the 4-aspartylphosphate intermediate in catalysis. Positions 713 and 717 each coordinate Mg(2+). A run of 2 helical transmembrane segments spans residues 772-792 and 795-815; these read FWAF…LYPL and TLLS…FVLG.

It belongs to the cation transport ATPase (P-type) (TC 3.A.3) family. Type IB subfamily.

The protein localises to the cell membrane. The enzyme catalyses Cu(2+)(in) + ATP + H2O = Cu(2+)(out) + ADP + phosphate + H(+). Its function is as follows. Involved in copper transport. This chain is Copper-transporting ATPase 1 (actP1), found in Rhizobium meliloti (strain 1021) (Ensifer meliloti).